The sequence spans 976 residues: LRR receptor-like serine/threonine-protein kinase ERECTA (976 aa).

Residues 1–24 (MALFRDIVLLGFLFCLSLVATVTS) form the signal peptide. Topologically, residues 25 to 580 (EEGATLLEIK…RRTVRVSISR (556 aa)) are extracellular. Residues Asn-65 and Asn-74 are each glycosylated (N-linked (GlcNAc...) asparagine). 20 LRR repeats span residues 69–92 (NVVALNLSDLNLDGEISPAIGDLK), 93–115 (SLLSIDLRGNRLSGQIPDEIGDC), 117–140 (SLQNLDLSFNELSGDIPFSISKLK), 141–163 (QLEQLILKNNQLIGPIPSTLSQI), 165–187 (NLKILDLAQNKLSGEIPRLIYWN), 189–212 (VLQYLGLRGNNLVGNISPDLCQLT), 213–235 (GLWYFDVRNNSLTGSIPETIGNC), 237–259 (AFQVLDLSYNQLTGEIPFDIGFL), 260–282 (QVATLSLQGNQLSGKIPSVIGLM), 284–306 (ALAVLDLSGNLLSGSIPPILGNL), 308–330 (FTEKLYLHSNKLTGSIPPELGNM), 332–355 (KLHYLELNDNHLTGHIPPELGKLT), 356–379 (DLFDLNVANNDLEGPIPDHLSSCT), 380–401 (NLNSLNVHGNKFSGTIPRAFQK), 404–425 (SMTYLNLSSNNIKGPIPVELSR), 428–449 (NLDTLDLSNNKINGIIPSSLGD), 452–473 (HLLKMNLSRNHITGVVPGDFGN), 476–498 (SIMEIDLSNNDISGPIPEELNQL), 500–522 (NIILLRLENNNLTGNVGSLANCL), and 523–545 (SLTVLNVSHNNLVGDIPKNNNFS). N-linked (GlcNAc...) asparagine glycosylation is found at Asn-221 and Asn-234. N-linked (GlcNAc...) asparagine glycans are attached at residues Asn-305 and Asn-329. A glycan (N-linked (GlcNAc...) asparagine) is linked at Asn-409. Asn-457 is a glycosylation site (N-linked (GlcNAc...) asparagine). Asn-510, Asn-528, and Asn-543 each carry an N-linked (GlcNAc...) asparagine glycan. The helical transmembrane segment at 581–601 (AAILGIAIGGLVILLMVLIAA) threads the bilayer. Topologically, residues 602–976 (CRPHNPPPFL…FGQVISQNSE (375 aa)) are cytoplasmic. Phosphothreonine is present on Thr-645. Residues 648 to 918 (LSEKYIIGHG…QVTRVLGSFM (271 aa)) form the Protein kinase domain. ATP-binding positions include 654–662 (IGHGASSTV) and Lys-676. 2 positions are modified to phosphotyrosine: Tyr-721 and Tyr-760. Asp-773 serves as the catalytic Proton acceptor. The residue at position 815 (Tyr-815) is a Phosphotyrosine. Thr-823 bears the Phosphothreonine mark.

It belongs to the protein kinase superfamily. Ser/Thr protein kinase family. As to quaternary structure, homodimer and heterodimer with ERL1 and TMM. Interacts with EPF1, EPF2, EPFL4, EPFL5 and EPFL6. Interacts with SERK1, SERK2, SERK3/BAK1 and SERK4 in a EPF2-induced manner. Interacts with EPFL9/STOMAGEN. In terms of tissue distribution, mostly expressed in shoot apical meristems (SAM), organ primordia, flowers, siliques and young rosette leaves, and, to a lower extent, in stems and cauline leaves. Expressed in growing inflorescence stems and pedicels. Detected in epidermis, phloem and xylem.

Its subcellular location is the cell membrane. It carries out the reaction L-seryl-[protein] + ATP = O-phospho-L-seryl-[protein] + ADP + H(+). The catalysed reaction is L-threonyl-[protein] + ATP = O-phospho-L-threonyl-[protein] + ADP + H(+). Functionally, receptor kinase that, together with ERL1 and ERL2, regulates aerial architecture, including inflorescence (e.g. shoot apical meristem-originating organ shape, elongation of the internode and pedicels, and adaxial-abaxial polarity), and stomatal patterning (e.g. density and clustering), probably by tuning cell division and expansion. Redundantly involved with ERL1 in procambial development regulation. Forms a functional ligand-receptor pair with EPF2 (AC Q8LC53). Modulates plant transpiration efficiency by controlling stomatal density, leaf photosynthetic capacity, epidermal cell expansion, mesophyll cell proliferation and cell-cell contact. A phloem-specific expression of ER is sufficient for proper inflorescence architecture. Probable major trait regulating canalization (maintenance of phenotype despite varying environment) in many aspect of the plant physiology (e.g. plant morphology, light-dependent leaves number, branch number, flowering time, phytate and mineral concentrations) by transducing microenvironmental variation into phenotypic differentiation (ecological amplifier). May maintain development integrity in heat stress conditions. Regulates cell wall composition and structure. Confers resistance to the pathogenic bacteria Ralstonia solanacearum and to the necrotrophic fungi Plectosphaerella cucumerina and Pythium irregulare, and required for callose deposition upon infection. Resistance to P.cucumerina seems cell wall-mediated. Forms a constitutive complex with TMM involved in the recognition of the stomatal regulatory peptides EPF1, EPF2 and EPFL9/STOMAGEN. The polypeptide is LRR receptor-like serine/threonine-protein kinase ERECTA (Arabidopsis thaliana (Mouse-ear cress)).